The chain runs to 145 residues: uncharacterized protein (145 aa).

Positions 1–23 (MSSSNLSSRKTRISAHFLDAAPA) are cleaved as a signal peptide. A helical membrane pass occupies residues 123–140 (VLLLIIALVFLLFVAIFI).

Its subcellular location is the membrane. This is an uncharacterized protein from Archaeoglobus fulgidus (strain ATCC 49558 / DSM 4304 / JCM 9628 / NBRC 100126 / VC-16).